The sequence spans 461 residues: Ornithine decarboxylase (461 aa).

N6-(pyridoxal phosphate)lysine is present on Lys69. Residues Ser200, Gly237, and 274–277 (EPGR) each bind pyridoxal 5'-phosphate. The residue at position 303 (Ser303) is a Phosphoserine; by CK2. 331–332 (YD) lines the substrate pocket. The active-site Proton donor; shared with dimeric partner is the Cys360. Cys360 is subject to S-nitrosocysteine. Asp361 lines the substrate pocket. Tyr389 contacts pyridoxal 5'-phosphate.

The protein belongs to the Orn/Lys/Arg decarboxylase class-II family. Homodimer. Only the dimer is catalytically active, as the active sites are constructed of residues from both monomers. Requires pyridoxal 5'-phosphate as cofactor.

The enzyme catalyses L-ornithine + H(+) = putrescine + CO2. The protein operates within amine and polyamine biosynthesis; putrescine biosynthesis via L-ornithine pathway; putrescine from L-ornithine: step 1/1. Inhibited by antizymes (AZs) OAZ1, OAZ2 and OAZ3 in response to polyamine levels. AZs inhibit the assembly of the functional homodimer by binding to ODC monomers. Additionally, OAZ1 targets ODC monomers for ubiquitin-independent proteolytic destruction by the 26S proteasome. Functionally, catalyzes the first and rate-limiting step of polyamine biosynthesis that converts ornithine into putrescine, which is the precursor for the polyamines, spermidine and spermine. Polyamines are essential for cell proliferation and are implicated in cellular processes, ranging from DNA replication to apoptosis. The polypeptide is Ornithine decarboxylase (Odc1) (Rattus norvegicus (Rat)).